A 224-amino-acid chain; its full sequence is 7-cyano-7-deazaguanine synthase (224 aa).

Residue 9–19 (LSGGLDSATVL) coordinates ATP. 4 residues coordinate Zn(2+): Cys189, Cys199, Cys202, and Cys205.

This sequence belongs to the QueC family. The cofactor is Zn(2+).

The enzyme catalyses 7-carboxy-7-deazaguanine + NH4(+) + ATP = 7-cyano-7-deazaguanine + ADP + phosphate + H2O + H(+). The protein operates within purine metabolism; 7-cyano-7-deazaguanine biosynthesis. In terms of biological role, catalyzes the ATP-dependent conversion of 7-carboxy-7-deazaguanine (CDG) to 7-cyano-7-deazaguanine (preQ(0)). In Ralstonia nicotianae (strain ATCC BAA-1114 / GMI1000) (Ralstonia solanacearum), this protein is 7-cyano-7-deazaguanine synthase.